A 65-amino-acid chain; its full sequence is Large ribosomal subunit protein uL29 (65 aa).

This sequence belongs to the universal ribosomal protein uL29 family.

In Borreliella burgdorferi (strain ATCC 35210 / DSM 4680 / CIP 102532 / B31) (Borrelia burgdorferi), this protein is Large ribosomal subunit protein uL29 (rpmC).